A 459-amino-acid polypeptide reads, in one-letter code: Interleukin-7 receptor subunit alpha (459 aa).

The signal sequence occupies residues 1–20; it reads MTILGTTFGMVFSLLQVVSG. The Extracellular segment spans residues 21–239; it reads ESGYAQNGDL…EINNSSGEMD (219 aa). The cysteines at positions 42 and 57 are disulfide-linked. 2 N-linked (GlcNAc...) asparagine glycosylation sites follow: Asn49 and Asn65. Disulfide bonds link Cys74–Cys82 and Cys108–Cys118. A Fibronectin type-III domain is found at 131–231; it reads APFDLSVVYR…PSYYFRTPEI (101 aa). Asn151 and Asn182 each carry an N-linked (GlcNAc...) asparagine glycan. The WSXWS motif signature appears at 217-221; it reads WSEWS. N-linked (GlcNAc...) asparagine glycans are attached at residues Asn232 and Asn233. A helical membrane pass occupies residues 240–264; sequence PILLTISILSFFSVALLVILACVLW. The Cytoplasmic segment spans residues 265-459; the sequence is KKRIKPIVWP…VTMSSFYQNQ (195 aa). The short motif at 272 to 280 is the Box 1 motif element; sequence VWPSLPDHK. Position 282 is a phosphothreonine; by PKC (Thr282).

The protein belongs to the type I cytokine receptor family. Type 4 subfamily. As to quaternary structure, the IL7 receptor is a heterodimer of IL7R and IL2RG. The TSLP receptor is a heterodimer of CRLF2 and IL7R. Interacts with CD53. N-glycosylated IL-7Ralpha binds IL7 300-fold more tightly than the unglycosylated form. In terms of processing, ubiquitinated by MARCHF8; leading to lysosomal degradation.

The protein localises to the cell membrane. It localises to the secreted. Receptor for interleukin-7. Also acts as a receptor for thymic stromal lymphopoietin (TSLP). The sequence is that of Interleukin-7 receptor subunit alpha (IL7R) from Homo sapiens (Human).